The following is a 779-amino-acid chain: uncharacterized protein (779 aa).

C72 and C75 together coordinate [4Fe-4S] cluster.

This sequence belongs to the prokaryotic molybdopterin-containing oxidoreductase family. Requires [4Fe-4S] cluster as cofactor. Mo-bis(molybdopterin guanine dinucleotide) serves as cofactor.

This is an uncharacterized protein from Mycobacterium bovis (strain ATCC BAA-935 / AF2122/97).